The sequence spans 436 residues: Probable cinnamyl alcohol dehydrogenase 8B (436 aa).

Cys-120 contacts Zn(2+). Residue Thr-122 participates in NADP(+) binding. Residues His-142, Glu-143, Cys-173, Cys-176, Cys-179, Cys-187, and Cys-236 each coordinate Zn(2+). NADP(+)-binding positions include Thr-240, 261–266 (GLGGLG), 284–289 (STSPGK), Thr-324, Gly-348, and 371–373 (NCV).

Belongs to the zinc-containing alcohol dehydrogenase family. Homodimer. Zn(2+) serves as cofactor.

It catalyses the reaction (E)-cinnamyl alcohol + NADP(+) = (E)-cinnamaldehyde + NADPH + H(+). It carries out the reaction (E)-coniferol + NADP(+) = (E)-coniferaldehyde + NADPH + H(+). The catalysed reaction is (E)-sinapyl alcohol + NADP(+) = (E)-sinapaldehyde + NADPH + H(+). The enzyme catalyses (E)-4-coumaroyl alcohol + NADP(+) = (E)-4-coumaraldehyde + NADPH + H(+). It catalyses the reaction (E)-caffeyl alcohol + NADP(+) = (E)-caffeyl aldehyde + NADPH + H(+). It functions in the pathway aromatic compound metabolism; phenylpropanoid biosynthesis. Functionally, involved in lignin biosynthesis. Catalyzes the final step specific for the production of lignin monomers. Catalyzes the NADPH-dependent reduction of coniferaldehyde, 5-hydroxyconiferaldehyde, sinapaldehyde, 4-coumaraldehyde and caffeyl aldehyde to their respective alcohols. This is Probable cinnamyl alcohol dehydrogenase 8B from Oryza sativa subsp. japonica (Rice).